The primary structure comprises 453 residues: MNKLSVVILAAGKGTRMYSDLPKVLHKIAGKPMVKHVIDTAKKLSAAQIHLIYGHGADLLKQHLADEPVNWVFQSEQLGTGHAMQQAAPFFQDDENIVMLYGDVPLISKETLECLISQKPENGIALLTVNLDNPTGYGRVIRENGTVTAIVEQKDANPEQLKITEVNTGVMVSDGASFRKWLARLDNNNAQGEYYMTDVIGLANQDGLKVVAVQAKDLMEVEGVNNRLQLANLERHFQRKQVEKLLLAGVTFADPARFDLRGELTHGKDVEIDINVIIEGTVRLGNNVFIGAGCVLKNCTIADNVEIKPYSVIEDAIVGNNAKIGPFSRLRPGAELSENTHVGNFVEIKKAQIGKGSKVNHLSYIGDAEVGHHCNIGAGVITCNYDGANKFKTLIGDNVFVGSDSQLVAPLTIASGATIGAGTTVTKDVQENELVITRVPQRHISNWQRPKRK.

The segment at Met-1–Arg-227 is pyrophosphorylase. Residues Leu-9 to Gly-12, Lys-23, Gln-74, Gly-79 to Thr-80, Tyr-101 to Asp-103, Gly-138, Glu-152, Asn-167, and Asn-225 each bind UDP-N-acetyl-alpha-D-glucosamine. Asp-103 is a binding site for Mg(2+). Asn-225 lines the Mg(2+) pocket. A linker region spans residues Leu-228–Ala-248. The interval Gly-249–Lys-453 is N-acetyltransferase. Arg-331 and Lys-349 together coordinate UDP-N-acetyl-alpha-D-glucosamine. The active-site Proton acceptor is His-361. Residues Tyr-364 and Asn-375 each contribute to the UDP-N-acetyl-alpha-D-glucosamine site. Acetyl-CoA-binding positions include Ala-378, Asn-384–Tyr-385, Ser-403, Ala-421, and Arg-438.

It in the N-terminal section; belongs to the N-acetylglucosamine-1-phosphate uridyltransferase family. The protein in the C-terminal section; belongs to the transferase hexapeptide repeat family. Homotrimer. Mg(2+) is required as a cofactor.

It is found in the cytoplasm. The enzyme catalyses alpha-D-glucosamine 1-phosphate + acetyl-CoA = N-acetyl-alpha-D-glucosamine 1-phosphate + CoA + H(+). It catalyses the reaction N-acetyl-alpha-D-glucosamine 1-phosphate + UTP + H(+) = UDP-N-acetyl-alpha-D-glucosamine + diphosphate. It functions in the pathway nucleotide-sugar biosynthesis; UDP-N-acetyl-alpha-D-glucosamine biosynthesis; N-acetyl-alpha-D-glucosamine 1-phosphate from alpha-D-glucosamine 6-phosphate (route II): step 2/2. Its pathway is nucleotide-sugar biosynthesis; UDP-N-acetyl-alpha-D-glucosamine biosynthesis; UDP-N-acetyl-alpha-D-glucosamine from N-acetyl-alpha-D-glucosamine 1-phosphate: step 1/1. It participates in bacterial outer membrane biogenesis; LPS lipid A biosynthesis. In terms of biological role, catalyzes the last two sequential reactions in the de novo biosynthetic pathway for UDP-N-acetylglucosamine (UDP-GlcNAc). The C-terminal domain catalyzes the transfer of acetyl group from acetyl coenzyme A to glucosamine-1-phosphate (GlcN-1-P) to produce N-acetylglucosamine-1-phosphate (GlcNAc-1-P), which is converted into UDP-GlcNAc by the transfer of uridine 5-monophosphate (from uridine 5-triphosphate), a reaction catalyzed by the N-terminal domain. The polypeptide is Bifunctional protein GlmU (Histophilus somni (strain 129Pt) (Haemophilus somnus)).